Here is a 245-residue protein sequence, read N- to C-terminus: TPR repeat-containing protein PA4299 (245 aa).

An N-terminal signal peptide occupies residues 1–16 (MKALIGIGLCAALLGG). The N-palmitoyl cysteine moiety is linked to residue cysteine 17. Residue cysteine 17 is the site of S-diacylglycerol cysteine attachment. TPR repeat units lie at residues 100-133 (PEAH…RPTE), 135-167 (RFRN…QQGG), and 169-200 (LPAT…DARD). Residues 210–245 (SWGAVPTPGAAPASDDPLAELPAEANMHTAMANEAP) form a disordered region.

It is found in the cell membrane. This Pseudomonas aeruginosa (strain ATCC 15692 / DSM 22644 / CIP 104116 / JCM 14847 / LMG 12228 / 1C / PRS 101 / PAO1) protein is TPR repeat-containing protein PA4299.